The primary structure comprises 101 residues: Small ribosomal subunit protein uS14 (101 aa).

Belongs to the universal ribosomal protein uS14 family. In terms of assembly, part of the 30S ribosomal subunit. Contacts proteins S3 and S10.

Functionally, binds 16S rRNA, required for the assembly of 30S particles and may also be responsible for determining the conformation of the 16S rRNA at the A site. The chain is Small ribosomal subunit protein uS14 from Dechloromonas aromatica (strain RCB).